A 338-amino-acid polypeptide reads, in one-letter code: Inositol 2-dehydrogenase 3 (338 aa).

It belongs to the Gfo/Idh/MocA family. As to quaternary structure, homotetramer.

It carries out the reaction myo-inositol + NAD(+) = scyllo-inosose + NADH + H(+). In terms of biological role, involved in the oxidation of myo-inositol (MI) to 2-keto-myo-inositol (2KMI or 2-inosose). In Saccharopolyspora erythraea (strain ATCC 11635 / DSM 40517 / JCM 4748 / NBRC 13426 / NCIMB 8594 / NRRL 2338), this protein is Inositol 2-dehydrogenase 3.